The following is a 413-amino-acid chain: MVYLQKQDKEVFDAIKLELGRQRANIELIASENFVSEQVMEAMGSVLTNKYAEGYPGKRYYGGCEFVDIVEDLARDRAKKLFGAEYANVQPHSGAQANMAVYHTVLEPGDTVLGMNLSHGGHLTHGSPVNFSGVLYNFVEYGVREDTKEIDYEIVREAALKHKPKMIVAGASAYPRKIDFAKFREIADEVGAYLMVDMAHIAGLVAAGLHQNPVPYADFTTTTTHKTLRGPRGGMILAKAEWEQKLNKSIFPGIQGGPLMHVIAAKAVAFGEALQPEFTAYCEQIIRNSKKLAETLQANDVAVLTGGSDNHLLLIDLKPLGLTGKAAEKVLDEVGITVNKNTIPFETESPFVTSGIRVGVAAVTTRGFDEVAIEKVGVLISEVLHNLENEEVLADVKARVANLTNEYPLYPSL.

(6S)-5,6,7,8-tetrahydrofolate contacts are provided by residues leucine 117 and 121-123 (GHL). Lysine 226 is modified (N6-(pyridoxal phosphate)lysine). 349 to 351 (SPF) contacts (6S)-5,6,7,8-tetrahydrofolate.

Belongs to the SHMT family. As to quaternary structure, homodimer. Pyridoxal 5'-phosphate serves as cofactor.

The protein resides in the cytoplasm. The enzyme catalyses (6R)-5,10-methylene-5,6,7,8-tetrahydrofolate + glycine + H2O = (6S)-5,6,7,8-tetrahydrofolate + L-serine. Its pathway is one-carbon metabolism; tetrahydrofolate interconversion. It participates in amino-acid biosynthesis; glycine biosynthesis; glycine from L-serine: step 1/1. Catalyzes the reversible interconversion of serine and glycine with tetrahydrofolate (THF) serving as the one-carbon carrier. This reaction serves as the major source of one-carbon groups required for the biosynthesis of purines, thymidylate, methionine, and other important biomolecules. Also exhibits THF-independent aldolase activity toward beta-hydroxyamino acids, producing glycine and aldehydes, via a retro-aldol mechanism. This is Serine hydroxymethyltransferase from Listeria innocua serovar 6a (strain ATCC BAA-680 / CLIP 11262).